A 182-amino-acid polypeptide reads, in one-letter code: Small ribosomal subunit protein uS4c (182 aa).

The segment at 8–36 (LGALPGLTSKRPGSGSDPKNKSRSGKRSQ) is disordered. The S4 RNA-binding domain occupies 82 to 143 (MRLDNILFRL…KQRSKALIQN (62 aa)).

Belongs to the universal ribosomal protein uS4 family. Part of the 30S ribosomal subunit. Contacts protein S5. The interaction surface between S4 and S5 is involved in control of translational fidelity.

It is found in the plastid. The protein localises to the chloroplast. Functionally, one of the primary rRNA binding proteins, it binds directly to 16S rRNA where it nucleates assembly of the body of the 30S subunit. Its function is as follows. With S5 and S12 plays an important role in translational accuracy. The chain is Small ribosomal subunit protein uS4c (rps4) from Dietes robinsoniana (Lord Howe wedding lily).